Here is a 120-residue protein sequence, read N- to C-terminus: Spermidine export protein MdtJ (120 aa).

The next 4 membrane-spanning stretches (helical) occupy residues 1–21 (MFYWILLALAIAAEITGTLSM), 31–51 (TGFILMLVMITLSYIFLSFAV), 54–74 (IALGVAYALWEGIGILFITLF), and 81–101 (EALSAMKIAGLVTLVFGIALI).

It belongs to the drug/metabolite transporter (DMT) superfamily. Small multidrug resistance (SMR) (TC 2.A.7.1) family. MdtJ subfamily. As to quaternary structure, forms a complex with MdtI.

Its subcellular location is the cell inner membrane. Functionally, catalyzes the excretion of spermidine. This Citrobacter koseri (strain ATCC BAA-895 / CDC 4225-83 / SGSC4696) protein is Spermidine export protein MdtJ.